The sequence spans 298 residues: Zinc import ATP-binding protein ZnuC (298 aa).

One can recognise an ABC transporter domain in the interval 17–232 (IELRNAGVYR…PEYVRLFGSR (216 aa)). ATP is bound at residue 49–56 (GQNGAGKS). Residues 273 to 298 (RGHCHVEDGHHHDHEHHHHEGGQPRA) are disordered. A compositionally biased stretch (basic and acidic residues) spans 276 to 298 (CHVEDGHHHDHEHHHHEGGQPRA).

This sequence belongs to the ABC transporter superfamily. Zinc importer (TC 3.A.1.15.5) family. In terms of assembly, the complex is composed of two ATP-binding proteins (ZnuC), two transmembrane proteins (ZnuB) and a solute-binding protein (ZnuA).

The protein localises to the cell inner membrane. It catalyses the reaction Zn(2+)(out) + ATP(in) + H2O(in) = Zn(2+)(in) + ADP(in) + phosphate(in) + H(+)(in). Part of the ABC transporter complex ZnuABC involved in zinc import. Responsible for energy coupling to the transport system. This chain is Zinc import ATP-binding protein ZnuC, found in Brucella melitensis biotype 1 (strain ATCC 23456 / CCUG 17765 / NCTC 10094 / 16M).